The sequence spans 92 residues: Small ribosomal subunit protein uS19c (92 aa).

Belongs to the universal ribosomal protein uS19 family.

It localises to the plastid. Its subcellular location is the chloroplast. In terms of biological role, protein S19 forms a complex with S13 that binds strongly to the 16S ribosomal RNA. This chain is Small ribosomal subunit protein uS19c, found in Nephroselmis olivacea (Green alga).